The primary structure comprises 454 residues: Glutamate mutase epsilon subunit (454 aa).

Position 67 (arginine 67) interacts with L-glutamate. Glycine 69 lines the adenosylcob(III)alamin pocket. Position 99 (arginine 99) interacts with L-glutamate. Position 122 (asparagine 122) interacts with adenosylcob(III)alamin. Residues 148 to 149 (RH), glutamate 170, and tyrosine 176 contribute to the L-glutamate site. Adenosylcob(III)alamin is bound at residue proline 179. Tyrosine 180 contacts L-glutamate. Phenylalanine 296, lysine 325, glutamate 329, and isoleucine 333 together coordinate adenosylcob(III)alamin.

It belongs to the methylaspartate mutase GlmE subunit family. Heterotetramer composed of 2 epsilon subunits (GlmE) and 2 sigma subunits (GlmS). GlmE exists as a homodimer and GlmS as a monomer. The cofactor is adenosylcob(III)alamin.

The enzyme catalyses (2S,3S)-3-methyl-L-aspartate = L-glutamate. It participates in amino-acid degradation; L-glutamate degradation via mesaconate pathway; acetate and pyruvate from L-glutamate: step 1/4. Functionally, catalyzes the carbon skeleton rearrangement of L-glutamate to L-threo-3-methylaspartate ((2S,3S)-3-methylaspartate). The sequence is that of Glutamate mutase epsilon subunit from Shigella dysenteriae serotype 1 (strain Sd197).